Here is a 275-residue protein sequence, read N- to C-terminus: 4-diphosphocytidyl-2-C-methyl-D-erythritol kinase (275 aa).

The active site involves Lys8. Residue 86 to 96 (PEGAGLGGGSS) participates in ATP binding. Asp125 is an active-site residue.

This sequence belongs to the GHMP kinase family. IspE subfamily.

It catalyses the reaction 4-CDP-2-C-methyl-D-erythritol + ATP = 4-CDP-2-C-methyl-D-erythritol 2-phosphate + ADP + H(+). It participates in isoprenoid biosynthesis; isopentenyl diphosphate biosynthesis via DXP pathway; isopentenyl diphosphate from 1-deoxy-D-xylulose 5-phosphate: step 3/6. Its function is as follows. Catalyzes the phosphorylation of the position 2 hydroxy group of 4-diphosphocytidyl-2C-methyl-D-erythritol. The polypeptide is 4-diphosphocytidyl-2-C-methyl-D-erythritol kinase (Thermus thermophilus (strain ATCC BAA-163 / DSM 7039 / HB27)).